The chain runs to 138 residues: Small ribosomal subunit protein uS11c (138 aa).

A disordered region spans residues 1–21 (MAKSISKIGSRKNARIGSRKQ). The span at 9 to 21 (GSRKNARIGSRKQ) shows a compositional bias: basic residues.

Belongs to the universal ribosomal protein uS11 family. As to quaternary structure, part of the 30S ribosomal subunit.

The protein resides in the plastid. It localises to the chloroplast. The polypeptide is Small ribosomal subunit protein uS11c (Cicer arietinum (Chickpea)).